The following is a 306-amino-acid chain: Latrophilin receptor-like protein A (306 aa).

Residues 1–15 are Extracellular-facing; that stretch reads MPSQLLNTVLSYLTD. Residues 16–36 form a helical membrane-spanning segment; the sequence is ILLSLSIVGSFLTIFTFMLYP. At 37–41 the chain is on the cytoplasmic side; the sequence is KLRSY. The helical transmembrane segment at 42–62 threads the bilayer; sequence PIKLIIYLCMSIVFSLFFFEI. Over 63-70 the chain is Extracellular; it reads SFRSSNSL. A helical membrane pass occupies residues 71–91; the sequence is FCIPAAILVHYFFLANFFWTF. The Cytoplasmic segment spans residues 92–113; the sequence is SVSFNFFQMIVKRNRDSEFYER. A helical membrane pass occupies residues 114–134; that stretch reads YYHLISWGIPFIIIIFCAAFK. Residues 135–152 are Extracellular-facing; it reads KYVDRGGFCYLEDQYSVY. The helical transmembrane segment at 153–173 threads the bilayer; it reads FGFFMPGVIIVCSNICIYVFV. The Cytoplasmic portion of the chain corresponds to 174 to 196; it reads AKEIYKTLRHTPTQKRQTVKEFR. The helical transmembrane segment at 197 to 217 threads the bilayer; that stretch reads VYFSIFVSIGSSWIFGFIYMF. At 218 to 222 the chain is on the extracellular side; sequence SDSNS. A helical transmembrane segment spans residues 223–243; that stretch reads IIGYIFLILFSISTSLQGFFI. Residues 244 to 306 lie on the Cytoplasmic side of the membrane; it reads FISYCLNYKV…TTTTTNVYSA (63 aa). The disordered stretch occupies residues 279–306; sequence TTQSGPTGTTDSSSTMTSTTTTTNVYSA.

Belongs to the G-protein coupled receptor 2 family. LN-TM7 subfamily.

It localises to the membrane. The sequence is that of Latrophilin receptor-like protein A (lrlA) from Dictyostelium discoideum (Social amoeba).